Reading from the N-terminus, the 52-residue chain is Thiocillin (52 aa).

Residues 1–38 (MSEIKKALNTLEIEDFDAIEMVDVDAMPENEALEIMGA) constitute a propeptide that is removed on maturation. A cross-link (thiazole-4-carboxylic acid (Ser-Cys)) is located at residues 39 to 40 (SC). The segment at residues 39 to 47 (SCTTCVCTC) is a cross-link (pyridine-2,5-dicarboxylic acid (Ser-Cys) (with S-48)). Positions 39–48 (SCTTCVCTCS) form a cross-link, pyridine-2,5-dicarboxylic acid (Ser-Ser) (with C-47). Position 42 is a (Z)-2,3-didehydrobutyrine (threonine 42). The segment at residues 42–43 (TC) is a cross-link (thiazole-4-carboxylic acid (Thr-Cys)). The residue at position 44 (valine 44) is a 3-hydroxyvaline (Val); partial. The segment at residues 44–45 (VC) is a cross-link (thiazole-4-carboxylic acid (Val-Cys)). Threonine 46 is subject to O-methylthreonine; partial. The thiazole-4-carboxylic acid (Thr-Cys) cross-link spans 46–47 (TC). A cross-link (thiazole-4-carboxylic acid (Ser-Cys)) is located at residues 48–49 (SC). Positions 49–50 (CC) form a cross-link, thiazole-4-carboxylic acid (Cys-Cys). Threonine 51 bears the (Z)-2,3-didehydrobutyrine mark. A 1-amino-2-propanone; alternate modification is found at threonine 52. Threonine 52 is modified (decarboxylated threonine; alternate).

This sequence belongs to the thiocillin family. Post-translationally, maturation of thiazole and oxazole containing antibiotics involves the enzymatic condensation of a Cys, Ser or Thr with the alpha-carbonyl of the preceding amino acid to form a thioether or ether bond, then dehydration to form a double bond with the alpha-amino nitrogen. Thiazoline or oxazoline ring are dehydrogenated to form thiazole or oxazole rings. Maturation of pyridinyl containing antibiotics involves the cross-linking of a Ser and a Cys-Ser pair usually separated by 7 or 8 residues along the peptide chain. The Ser residues are dehydrated to didehydroalanines, then bonded between their beta carbons. The alpha carbonyl of the Cys condenses with alpha carbon of the first Ser to form a pyridinyl ring. The ring may be multiply dehydrogenated to form a pyridine ring with loss of the amino nitrogen of the first Ser. In terms of processing, the 8 possible modification isomers, differing in the presence of modifications at three positions, have been characterized in PubMed:19196969. Val-44 is modified to 3-hydroxyvaline in forms thiocillin I, thiocillin II, YM-266183, and YM-266184. Thr-46 is modified to O-methylthreonine in forms thiocillin II, thiocillin III, thiocillin IV, and YM-266184. Thr-52 is decarboxylated to (R)-1-aminopropan-2-ol in forms micrococcin P1, thiocillin I, thiocillin II, and thiocillin III. Thr-52 is decarboxylated and oxidized to 1-amino-2-propanone in forms micrococcin P2, YM-266183, YM-266184. and thiocillin IV. Post-translationally, the structure of 2,3-didehydrobutyrines is not discussed in PubMed:19196969. However, in Fig. 3 the residues are diagrammed as Z-isomers.

Its subcellular location is the secreted. Its function is as follows. Has bacteriocidal activity against Gram-positive bacteria, but not against Gram-negative bacteria. Inhibits bacterial protein biosynthesis by acting on the elongation factor Tu (EF-Tu). This chain is Thiocillin, found in Bacillus cereus (strain ATCC 14579 / DSM 31 / CCUG 7414 / JCM 2152 / NBRC 15305 / NCIMB 9373 / NCTC 2599 / NRRL B-3711).